The primary structure comprises 344 residues: Dihydroorotase (344 aa).

Zn(2+) is bound by residues H14 and H16. Residues 16-18 (HLR) and N42 contribute to the substrate site. Positions 100, 137, and 175 each coordinate Zn(2+). N6-carboxylysine is present on K100. Residue H137 participates in substrate binding. L220 contacts substrate. Zn(2+) is bound at residue D248. D248 is a catalytic residue. Substrate contacts are provided by H252 and A264.

This sequence belongs to the metallo-dependent hydrolases superfamily. DHOase family. Class II DHOase subfamily. In terms of assembly, homodimer. It depends on Zn(2+) as a cofactor.

The catalysed reaction is (S)-dihydroorotate + H2O = N-carbamoyl-L-aspartate + H(+). Its pathway is pyrimidine metabolism; UMP biosynthesis via de novo pathway; (S)-dihydroorotate from bicarbonate: step 3/3. In terms of biological role, catalyzes the reversible cyclization of carbamoyl aspartate to dihydroorotate. The protein is Dihydroorotase of Cupriavidus taiwanensis (strain DSM 17343 / BCRC 17206 / CCUG 44338 / CIP 107171 / LMG 19424 / R1) (Ralstonia taiwanensis (strain LMG 19424)).